A 244-amino-acid chain; its full sequence is CTD nuclear envelope phosphatase 1 (244 aa).

The chain crosses the membrane as a helical span at residues 7–29 (LLGLRGFVAFAAKLWSFVLYLLR). Residues 58–225 (QVKRKVLVLD…NLLPMLDALR (168 aa)) enclose the FCP1 homology domain.

The protein belongs to the dullard family. As to quaternary structure, interacts with bmpr1a, bmpr1b and bmpr2.

Its subcellular location is the membrane. It localises to the cytoplasm. The protein localises to the perinuclear region. It catalyses the reaction O-phospho-L-seryl-[protein] + H2O = L-seryl-[protein] + phosphate. It carries out the reaction O-phospho-L-threonyl-[protein] + H2O = L-threonyl-[protein] + phosphate. In terms of biological role, serine/threonine protein phosphatase that may dephosphorylate and activate lipins. Lipins are phosphatidate phosphatases that catalyze the conversion of phosphatidic acid to diacylglycerol and control the metabolism of fatty acids at different levels. May indirectly modulate the lipid composition of nuclear and/or endoplasmic reticulum membranes and be required for proper nuclear membrane morphology and/or dynamics. May also indirectly regulate the production of lipid droplets and triacylglycerol. Induces neuronal differentiation by antagonizing BMP signaling. Acts both by dephosphorylating BMPR1A and by promoting BMPR2 proteasomal degradation. In Xenopus laevis (African clawed frog), this protein is CTD nuclear envelope phosphatase 1 (ctdnep1).